The chain runs to 225 residues: uncharacterized protein (225 aa).

The a divalent metal cation site is built by glutamate 69, glutamate 71, and aspartate 100.

It belongs to the FAH family.

This is an uncharacterized protein from Pyrococcus abyssi (strain GE5 / Orsay).